A 304-amino-acid chain; its full sequence is Phospholipase A1 (304 aa).

A disulfide bridge connects residues Cys-6 and Cys-90. Asn-61 carries N-linked (GlcNAc...) asparagine glycosylation. Ser-140 serves as the catalytic Nucleophile. Catalysis depends on Asp-168, which acts as the Charge relay system. 2 disulfides stabilise this stretch: Cys-179–Cys-184 and Cys-222–Cys-231. The active-site Charge relay system is the His-233. Cystine bridges form between Cys-248–Cys-272, Cys-249–Cys-297, and Cys-265–Cys-270.

This sequence belongs to the AB hydrolase superfamily. Lipase family. In terms of tissue distribution, expressed by the venom gland.

The protein resides in the secreted. The enzyme catalyses a 1,2-diacyl-sn-glycero-3-phosphocholine + H2O = a 2-acyl-sn-glycero-3-phosphocholine + a fatty acid + H(+). Its function is as follows. Catalyzes the hydrolysis of phosphatidylcholine with phospholipase A1 activity. May act as an allergen and induce hemolytic activity. This is Phospholipase A1 from Vespa velutina (Asian yellow-legged hornet).